The primary structure comprises 385 residues: 3-hydroxyisobutyryl-CoA hydrolase, mitochondrial (385 aa).

Residues Glu-120, Gly-145, Glu-168, and Asp-176 each contribute to the substrate site.

This sequence belongs to the enoyl-CoA hydratase/isomerase family.

Its subcellular location is the mitochondrion. The catalysed reaction is 3-hydroxy-2-methylpropanoyl-CoA + H2O = 3-hydroxy-2-methylpropanoate + CoA + H(+). Its pathway is amino-acid degradation; L-valine degradation. In terms of biological role, hydrolyzes 3-hydroxyisobutyryl-CoA (HIBYL-CoA), a saline catabolite. Has high activity toward isobutyryl-CoA. Could be an isobutyryl-CoA dehydrogenase that functions in valine catabolism. Also hydrolyzes 3-hydroxypropanoyl-CoA. This chain is 3-hydroxyisobutyryl-CoA hydrolase, mitochondrial (hibch), found in Xenopus tropicalis (Western clawed frog).